The chain runs to 349 residues: Protein RecA (349 aa).

65–72 (GPESSGKT) serves as a coordination point for ATP.

It belongs to the RecA family.

The protein resides in the cytoplasm. Its function is as follows. Can catalyze the hydrolysis of ATP in the presence of single-stranded DNA, the ATP-dependent uptake of single-stranded DNA by duplex DNA, and the ATP-dependent hybridization of homologous single-stranded DNAs. It interacts with LexA causing its activation and leading to its autocatalytic cleavage. The protein is Protein RecA of Vibrio vulnificus (strain CMCP6).